A 62-amino-acid chain; its full sequence is Beta-defensin 33 (62 aa).

The first 20 residues, 1-20 (MRLLFLLFILLVCLAQTTSG), serve as a signal peptide directing secretion. 3 disulfides stabilise this stretch: cysteine 30-cysteine 59, cysteine 37-cysteine 52, and cysteine 45-cysteine 60.

The protein belongs to the beta-defensin family.

Its subcellular location is the secreted. Functionally, has antibacterial activity. This is Beta-defensin 33 (Defb33) from Mus musculus (Mouse).